Consider the following 467-residue polypeptide: Major capsid protein (467 aa).

The protein belongs to the NCLDV major capsid protein family. As to quaternary structure, homotrimer.

The protein resides in the virion. In terms of biological role, major capsid protein that self assembles to form an icosahedral capsid with a T=147 symmetry. Represents around 50% of the total virion protein mass. The polypeptide is Major capsid protein (MCP) (Invertebrate iridescent virus 6 (IIV-6)).